The following is a 165-amino-acid chain: Lipoprotein signal peptidase (165 aa).

The next 4 membrane-spanning stretches (helical) occupy residues 7–27 (FFLL…KYWI), 28–48 (THTM…LYHV), 61–81 (FSHW…FWLW), and 87–107 (DKAL…GNLI). Residues Asp-117 and Asp-136 contribute to the active site. The chain crosses the membrane as a helical span at residues 128–148 (SFAIFNLADTFITLGAISILI).

This sequence belongs to the peptidase A8 family.

The protein resides in the cell inner membrane. It catalyses the reaction Release of signal peptides from bacterial membrane prolipoproteins. Hydrolyzes -Xaa-Yaa-Zaa-|-(S,diacylglyceryl)Cys-, in which Xaa is hydrophobic (preferably Leu), and Yaa (Ala or Ser) and Zaa (Gly or Ala) have small, neutral side chains.. It functions in the pathway protein modification; lipoprotein biosynthesis (signal peptide cleavage). Functionally, this protein specifically catalyzes the removal of signal peptides from prolipoproteins. This chain is Lipoprotein signal peptidase, found in Bartonella bacilliformis (strain ATCC 35685 / KC583 / Herrer 020/F12,63).